The primary structure comprises 188 residues: Elongation factor P (188 aa).

This sequence belongs to the elongation factor P family.

It localises to the cytoplasm. It participates in protein biosynthesis; polypeptide chain elongation. Functionally, involved in peptide bond synthesis. Stimulates efficient translation and peptide-bond synthesis on native or reconstituted 70S ribosomes in vitro. Probably functions indirectly by altering the affinity of the ribosome for aminoacyl-tRNA, thus increasing their reactivity as acceptors for peptidyl transferase. This Methylorubrum extorquens (strain CM4 / NCIMB 13688) (Methylobacterium extorquens) protein is Elongation factor P.